Here is a 415-residue protein sequence, read N- to C-terminus: Zona pellucida-like domain-containing protein 1 (415 aa).

The first 19 residues, 1-19 (MEQIWLLLLLTIRVLPGSA), serve as a signal peptide directing secretion. Topologically, residues 20–372 (QFNGYNCDAN…PPFQLNAITS (353 aa)) are extracellular. In terms of domain architecture, ZP spans 43-320 (YCGVQAITMK…PICSHRERRD (278 aa)). 2 disulfides stabilise this stretch: C44-C155 and C79-C104. Residues N121 and N164 are each glycosylated (N-linked (GlcNAc...) asparagine). Intrachain disulfides connect C235–C296 and C255–C313. Positions 323–360 (RRTTWSPQSSSGSAVLSAGPIITRSDETPTNNSQLGSP) are disordered. Composition is skewed to polar residues over residues 325–336 (TTWSPQSSSGSA) and 350–359 (TPTNNSQLGS). The chain crosses the membrane as a helical span at residues 373–393 (ALISGMVILGVTSFSLLLCSL). At 394–415 (ALLHRKGPTSLVLNGIRNPVFD) the chain is on the cytoplasmic side.

Post-translationally, proteolytically cleaved before the transmembrane segment to yield the secreted form found in the extracellular matrix of the cupula. Detected in placenta, kidney, lung, pancreas and at very low level in other tissues.

The protein resides in the cytoplasmic vesicle membrane. Its subcellular location is the secreted. It localises to the extracellular space. The protein localises to the extracellular matrix. Functionally, glycoprotein which is a component of the gelatinous extracellular matrix in the cupulae of the vestibular organ. In Homo sapiens (Human), this protein is Zona pellucida-like domain-containing protein 1 (ZPLD1).